Consider the following 74-residue polypeptide: Putative membrane protein insertion efficiency factor (74 aa).

The protein belongs to the UPF0161 family.

It is found in the cell inner membrane. In terms of biological role, could be involved in insertion of integral membrane proteins into the membrane. The chain is Putative membrane protein insertion efficiency factor from Syntrophus aciditrophicus (strain SB).